A 365-amino-acid chain; its full sequence is Cobalt-precorrin-5B C(1)-methyltransferase (365 aa).

The protein belongs to the CbiD family.

The catalysed reaction is Co-precorrin-5B + S-adenosyl-L-methionine = Co-precorrin-6A + S-adenosyl-L-homocysteine. It functions in the pathway cofactor biosynthesis; adenosylcobalamin biosynthesis; cob(II)yrinate a,c-diamide from sirohydrochlorin (anaerobic route): step 6/10. In terms of biological role, catalyzes the methylation of C-1 in cobalt-precorrin-5B to form cobalt-precorrin-6A. The sequence is that of Cobalt-precorrin-5B C(1)-methyltransferase from Clostridium perfringens (strain 13 / Type A).